A 92-amino-acid polypeptide reads, in one-letter code: Small ribosomal subunit protein uS19 (92 aa).

The protein belongs to the universal ribosomal protein uS19 family.

In terms of biological role, protein S19 forms a complex with S13 that binds strongly to the 16S ribosomal RNA. The polypeptide is Small ribosomal subunit protein uS19 (Bartonella quintana (strain Toulouse) (Rochalimaea quintana)).